Reading from the N-terminus, the 156-residue chain is Small ribosomal subunit protein uS7 (156 aa).

Belongs to the universal ribosomal protein uS7 family. In terms of assembly, part of the 30S ribosomal subunit. Contacts proteins S9 and S11.

One of the primary rRNA binding proteins, it binds directly to 16S rRNA where it nucleates assembly of the head domain of the 30S subunit. Is located at the subunit interface close to the decoding center, probably blocks exit of the E-site tRNA. The chain is Small ribosomal subunit protein uS7 from Dichelobacter nodosus (strain VCS1703A).